Reading from the N-terminus, the 664-residue chain is Putative membrane protein Bcell_0381 (664 aa).

Acidic residues predominate over residues 588–616; sequence DVTQDENGEEKSEEDNKEEIVEENTEEDN. Residues 588-622 are disordered; that stretch reads DVTQDENGEEKSEEDNKEEIVEENTEEDNKEEKTI. A helical transmembrane segment spans residues 636 to 656; it reads YQFLLAGIIMLVGGSCIYVFY.

Its subcellular location is the cell membrane. The polypeptide is Putative membrane protein Bcell_0381 (Evansella cellulosilytica (strain ATCC 21833 / DSM 2522 / FERM P-1141 / JCM 9156 / N-4) (Bacillus cellulosilyticus)).